Here is a 488-residue protein sequence, read N- to C-terminus: Histone deacetylase 2 (488 aa).

The segment at 9 to 322 (KKKVCYYYDG…WTYETAVALD (314 aa)) is histone deacetylase. 1D-myo-inositol 1,4,5,6-tetrakisphosphate is bound by residues Gly28 and Lys32. His142 is a catalytic residue. Residues Asp177, His179, and Asp265 each contribute to the Zn(2+) site. Arg271 provides a ligand contact to 1D-myo-inositol 1,4,5,6-tetrakisphosphate. A disordered region spans residues 389-488 (AVHEDSGDED…GAKSEQLSNP (100 aa)). The segment covering 402–417 (PDKRISIRASDKRIAC) has biased composition (basic and acidic residues). The segment covering 418 to 428 (DEEFSDSEDEG) has biased composition (acidic residues). The segment covering 429–481 (EGGRRNVADHKKGAKKARIEEDKKETEDKKADVKEEDKSKDNSGEKTDTKGAK) has biased composition (basic and acidic residues).

This sequence belongs to the histone deacetylase family. HD type 1 subfamily. Zn(2+) serves as cofactor.

The protein localises to the nucleus. It is found in the cytoplasm. It catalyses the reaction N(6)-acetyl-L-lysyl-[histone] + H2O = L-lysyl-[histone] + acetate. It carries out the reaction N(6)-acetyl-L-lysyl-[protein] + H2O = L-lysyl-[protein] + acetate. The catalysed reaction is N(6)-(2E)-butenoyl-L-lysyl-[protein] + H2O = (2E)-2-butenoate + L-lysyl-[protein]. The enzyme catalyses N(6)-(2-hydroxyisobutanoyl)-L-lysyl-[protein] + H2O = 2-hydroxy-2-methylpropanoate + L-lysyl-[protein]. It catalyses the reaction N(6)-[(S)-lactoyl]-L-lysyl-[protein] + H2O = (S)-lactate + L-lysyl-[protein]. Inositol tetraphosphate (1D-myo-inositol 1,4,5,6-tetrakisphosphate) may act as an intermolecular glue between HDAC2 and N-Cor repressor complex components. Histone deacetylase that catalyzes the deacetylation of lysine residues on the N-terminal part of the core histones (H2A, H2B, H3 and H4). Histone deacetylation gives a tag for epigenetic repression and plays an important role in transcriptional regulation, cell cycle progression and developmental events. Histone deacetylases act via the formation of large multiprotein complexes. Also deacetylates non-histone proteins. In addition to protein deacetylase activity, also acts as a protein-lysine deacylase by recognizing other acyl groups: catalyzes removal of (2E)-butenoyl (crotonyl), lactoyl (lactyl) and 2-hydroxyisobutanoyl (2-hydroxyisobutyryl) acyl groups from lysine residues, leading to protein decrotonylation, delactylation and de-2-hydroxyisobutyrylation, respectively. The chain is Histone deacetylase 2 (HDAC2) from Gallus gallus (Chicken).